The chain runs to 43 residues: Large ribosomal subunit protein uL5 (43 aa).

Belongs to the universal ribosomal protein uL5 family. As to quaternary structure, part of the 50S ribosomal subunit; part of the 5S rRNA/L5/L18/L25 subcomplex. Contacts the 5S rRNA and the P site tRNA. Forms a bridge to the 30S subunit in the 70S ribosome.

Functionally, this is one of the proteins that bind and probably mediate the attachment of the 5S RNA into the large ribosomal subunit, where it forms part of the central protuberance. In the 70S ribosome it contacts protein S13 of the 30S subunit (bridge B1b), connecting the 2 subunits; this bridge is implicated in subunit movement. Contacts the P site tRNA; the 5S rRNA and some of its associated proteins might help stabilize positioning of ribosome-bound tRNAs. In Proteus vulgaris, this protein is Large ribosomal subunit protein uL5 (rplE).